Consider the following 77-residue polypeptide: Protein AC145 (77 aa).

The protein resides in the host nucleus. It localises to the virion. Plays a role in primary oral infection of the host. This is Protein AC145 from Autographa californica nuclear polyhedrosis virus (AcMNPV).